We begin with the raw amino-acid sequence, 445 residues long: N-succinylarginine dihydrolase (445 aa).

Residues 19–28 (AGLSFGNVAS), Asn-110, and 137–138 (HR) each bind substrate. Glu-174 is an active-site residue. Position 214 (Arg-214) interacts with substrate. His-250 is a catalytic residue. Substrate-binding residues include Asp-252 and Asn-363. Cys-369 (nucleophile) is an active-site residue.

It belongs to the succinylarginine dihydrolase family. In terms of assembly, homodimer.

It carries out the reaction N(2)-succinyl-L-arginine + 2 H2O + 2 H(+) = N(2)-succinyl-L-ornithine + 2 NH4(+) + CO2. The protein operates within amino-acid degradation; L-arginine degradation via AST pathway; L-glutamate and succinate from L-arginine: step 2/5. In terms of biological role, catalyzes the hydrolysis of N(2)-succinylarginine into N(2)-succinylornithine, ammonia and CO(2). This Shewanella woodyi (strain ATCC 51908 / MS32) protein is N-succinylarginine dihydrolase.